Consider the following 760-residue polypeptide: Catecholate siderophore receptor Fiu (760 aa).

An N-terminal signal peptide occupies residues 1-31 (MENNRNFPARQFHSLTFFAGLCIGITPVAQA). The region spanning 67–175 (PVADTTRTMT…PTGSINMISK (109 aa)) is the TBDR plug domain. The TBDR beta-barrel domain maps to 180–760 (DSGIDASASI…TFLLTANMHF (581 aa)). The TonB C-terminal box motif lies at 743–760 (RYHPGEPRTFLLTANMHF).

It belongs to the TonB-dependent receptor family.

The protein resides in the cell outer membrane. Involved in the active transport across the outer membrane of iron complexed with catecholate siderophores such as dihydroxybenzoylserine and dihydroxybenzoate. It derives its energy for transport by interacting with the trans-periplasmic membrane protein TonB. Can also transport catechol-substituted cephalosporins. Receptor for microcins M, H47 and E492. This chain is Catecholate siderophore receptor Fiu (fiu), found in Escherichia coli (strain K12).